An 81-amino-acid polypeptide reads, in one-letter code: Protein Vpu (81 aa).

Residues 1–7 (MQPLVIA) lie on the Extracellular side of the membrane. Residues 8 to 28 (AIVALVVAGIIAIVVWSIVFI) form a helical membrane-spanning segment. At 29–81 (EYRKIRRQRKIDKLIDRISERAEDSGNESEGDQEELSALVGMGHDAPWVINDL) the chain is on the cytoplasmic side. A phosphoserine; by host CK2 mark is found at serine 53 and serine 57.

This sequence belongs to the HIV-1 VPU protein family. Homopentamer. Interacts with host CD4 and BRTC; these interactions induce proteasomal degradation of CD4. Interacts with host BST2; this interaction leads to the degradation of host BST2. Interacts with host FBXW11. Interacts with host AP1M1; this interaction plays a role in the mistrafficking and subsequent degradation of host BST2. Interacts with host RANBP2; this interaction allows Vpu to down-regulate host BLM sumoylation. Phosphorylated by host CK2. This phosphorylation is necessary for interaction with human BTRC and degradation of CD4.

The protein localises to the host membrane. Ion channel activity is inhibited by hexamethylene amiloride in vitro. Functionally, enhances virion budding by targeting host CD4 and Tetherin/BST2 to proteasome degradation. Degradation of CD4 prevents any unwanted premature interactions between viral Env and its host receptor CD4 in the endoplasmic reticulum. Degradation of antiretroviral protein Tetherin/BST2 is important for virion budding, as BST2 tethers new viral particles to the host cell membrane. Mechanistically, Vpu bridges either CD4 or BST2 to BTRC, a substrate recognition subunit of the Skp1/Cullin/F-box protein E3 ubiquitin ligase, induces their ubiquitination and subsequent proteasomal degradation. The alteration of the E3 ligase specificity by Vpu seems to promote the degradation of host IKBKB, leading to NF-kappa-B down-regulation and subsequent apoptosis. Acts as a viroporin that forms an oligomeric ion channel in membranes. Modulates the host DNA repair mechanisms to promote degradation of nuclear viral cDNA in cells that are already productively infected in order to suppress immune sensing and proviral hyper-integration (superinfection). Manipulates PML-NBs and modulates SUMOylation of host BLM protein thereby enhancing its DNA-end processing activity toward viral unintegrated linear DNA. Also inhibits RAD52-mediated homologous repair of viral cDNA, preventing the generation of dead-end circular forms of single copies of the long terminal repeat and permitting sustained nucleolytic attack. This chain is Protein Vpu, found in Homo sapiens (Human).